The primary structure comprises 393 residues: Formate-dependent phosphoribosylglycinamide formyltransferase (393 aa).

N(1)-(5-phospho-beta-D-ribosyl)glycinamide contacts are provided by residues 22-23 (EL) and Glu82. Residues Arg114, Lys155, 160–165 (SSGHGQ), 195–198 (EGFV), and Glu203 each bind ATP. The region spanning 119–308 (RLAAEELGLP…EFALHARAIL (190 aa)) is the ATP-grasp domain. Mg(2+) is bound by residues Glu267 and Glu279. N(1)-(5-phospho-beta-D-ribosyl)glycinamide-binding positions include Asp286, Lys356, and 363-364 (RR).

It belongs to the PurK/PurT family. In terms of assembly, homodimer.

It carries out the reaction N(1)-(5-phospho-beta-D-ribosyl)glycinamide + formate + ATP = N(2)-formyl-N(1)-(5-phospho-beta-D-ribosyl)glycinamide + ADP + phosphate + H(+). Its pathway is purine metabolism; IMP biosynthesis via de novo pathway; N(2)-formyl-N(1)-(5-phospho-D-ribosyl)glycinamide from N(1)-(5-phospho-D-ribosyl)glycinamide (formate route): step 1/1. Its function is as follows. Involved in the de novo purine biosynthesis. Catalyzes the transfer of formate to 5-phospho-ribosyl-glycinamide (GAR), producing 5-phospho-ribosyl-N-formylglycinamide (FGAR). Formate is provided by PurU via hydrolysis of 10-formyl-tetrahydrofolate. This is Formate-dependent phosphoribosylglycinamide formyltransferase from Pasteurella multocida (strain Pm70).